A 498-amino-acid polypeptide reads, in one-letter code: Glycerol kinase (498 aa).

Residue Thr-11 participates in ADP binding. Thr-11, Ser-12, and Ser-13 together coordinate ATP. Residue Thr-11 participates in sn-glycerol 3-phosphate binding. Arg-15 contacts ADP. Residues Arg-81, Glu-82, Tyr-133, and Asp-242 each coordinate sn-glycerol 3-phosphate. Arg-81, Glu-82, Tyr-133, Asp-242, and Gln-243 together coordinate glycerol. Positions 264 and 307 each coordinate ADP. ATP is bound by residues Thr-264, Gly-307, Gln-311, and Gly-412. ADP contacts are provided by Gly-412 and Asn-416.

It belongs to the FGGY kinase family.

It catalyses the reaction glycerol + ATP = sn-glycerol 3-phosphate + ADP + H(+). The protein operates within polyol metabolism; glycerol degradation via glycerol kinase pathway; sn-glycerol 3-phosphate from glycerol: step 1/1. Its activity is regulated as follows. Inhibited by fructose 1,6-bisphosphate (FBP). Key enzyme in the regulation of glycerol uptake and metabolism. Catalyzes the phosphorylation of glycerol to yield sn-glycerol 3-phosphate. This is Glycerol kinase from Acidovorax ebreus (strain TPSY) (Diaphorobacter sp. (strain TPSY)).